The primary structure comprises 355 residues: Peptide chain release factor 1 (355 aa).

The residue at position 231 (Gln-231) is an N5-methylglutamine. A compositionally biased stretch (basic and acidic residues) spans 281–291 (ERLAKESEARK). The interval 281–302 (ERLAKESEARKSQVGSGDRSER) is disordered.

Belongs to the prokaryotic/mitochondrial release factor family. Post-translationally, methylated by PrmC. Methylation increases the termination efficiency of RF1.

Its subcellular location is the cytoplasm. Its function is as follows. Peptide chain release factor 1 directs the termination of translation in response to the peptide chain termination codons UAG and UAA. The sequence is that of Peptide chain release factor 1 from Campylobacter jejuni subsp. doylei (strain ATCC BAA-1458 / RM4099 / 269.97).